The chain runs to 152 residues: Snaclec coagulation factor IX/factor X-binding protein subunit A (152 aa).

Residues 1-23 form the signal peptide; that stretch reads MGRFIFVSFGLLVVAASLSGTGA. Intrachain disulfides connect Cys25-Cys36, Cys53-Cys150, and Cys125-Cys142. Residues 32–151 enclose the C-type lectin domain; it reads YEGHCYKAFE…CGQRIPFVCE (120 aa). The Ca(2+) site is built by Ser64, Glu66, and Glu70. Glu151 contacts Ca(2+).

It belongs to the snaclec family. As to quaternary structure, heterodimer of subunits A and B; disulfide-linked. As to expression, expressed by the venom gland.

It localises to the secreted. In terms of biological role, anticoagulant protein which binds to the gamma-carboxyglutamic acid-domain regions of factors IX (F9) and factor X (F10) in the presence of calcium with a 1 to 1 stoichiometry. The sequence is that of Snaclec coagulation factor IX/factor X-binding protein subunit A from Trimeresurus stejnegeri (Chinese green tree viper).